Reading from the N-terminus, the 82-residue chain is Protein CYSTEINE-RICH TRANSMEMBRANE MODULE 13 (82 aa).

The disordered stretch occupies residues Met1 to Gln58. Residues Ala26–Gly37 are compositionally biased toward pro residues. The chain crosses the membrane as a helical span at residues Lys59–Cys76.

It belongs to the CYSTM1 family. In terms of assembly, homodimer and heterodimers. Interacts with CYSTM7, CYTSM3, CYTSM4, CYTSM5, CYTSM6, CYTSM9, CYTSM10 and CYTSM11. Binds weakly to CYSTM1 and CYSTM2. In terms of tissue distribution, expressed in root meristem, root vasculature, leaf vasculature and floral organ primordia. Mostly expressed in roots and flowers and, to a lower extent, in stems, siliques and leaves.

Its subcellular location is the cell membrane. Functionally, required for the promotion of megasporogenesis, or promotion of germ cell formation from somatic precursor cells. Acts redundantly with WIH2. Functions in a genetic pathway downstream of SPL/NZZ and WUS and together with TRN2 in promoting megasporogenesis. Involved in resistance to abiotic stress. The chain is Protein CYSTEINE-RICH TRANSMEMBRANE MODULE 13 from Arabidopsis thaliana (Mouse-ear cress).